Consider the following 208-residue polypeptide: Thymidylate kinase (208 aa).

An ATP-binding site is contributed by 10-17; the sequence is GPEGSGKS.

This sequence belongs to the thymidylate kinase family.

It carries out the reaction dTMP + ATP = dTDP + ADP. Phosphorylation of dTMP to form dTDP in both de novo and salvage pathways of dTTP synthesis. This chain is Thymidylate kinase, found in Bacillus cytotoxicus (strain DSM 22905 / CIP 110041 / 391-98 / NVH 391-98).